The following is a 257-amino-acid chain: Type III pantothenate kinase (257 aa).

6-13 (DVGNTSTK) provides a ligand contact to ATP. 109 to 112 (GADR) lines the substrate pocket. Aspartate 111 serves as the catalytic Proton acceptor. Aspartate 132 is a K(+) binding site. Threonine 135 serves as a coordination point for ATP. A substrate-binding site is contributed by threonine 187.

Belongs to the type III pantothenate kinase family. As to quaternary structure, homodimer. Requires NH4(+) as cofactor. K(+) is required as a cofactor.

The protein localises to the cytoplasm. It catalyses the reaction (R)-pantothenate + ATP = (R)-4'-phosphopantothenate + ADP + H(+). It participates in cofactor biosynthesis; coenzyme A biosynthesis; CoA from (R)-pantothenate: step 1/5. Functionally, catalyzes the phosphorylation of pantothenate (Pan), the first step in CoA biosynthesis. The protein is Type III pantothenate kinase of Anaplasma marginale (strain St. Maries).